The sequence spans 63 residues: Putative alpha-neurotoxin RjAa9 (63 aa).

One can recognise an LCN-type CS-alpha/beta domain in the interval 1-60 (KEGYPVDWGNCKYECMSDEYCKDLCADRKATSGYCYKLNWSCYCKGLPDDSPIKTPGKCR). 4 disulfides stabilise this stretch: Cys-11–Cys-59, Cys-15–Cys-35, Cys-21–Cys-42, and Cys-25–Cys-44.

It belongs to the long (4 C-C) scorpion toxin superfamily. Sodium channel inhibitor family. Alpha subfamily. In terms of tissue distribution, expressed by the venom gland.

The protein localises to the secreted. In terms of biological role, alpha toxins bind voltage-independently at site-3 of sodium channels (Nav) and inhibits the inactivation of the activated channels, thereby blocking neuronal transmission. The polypeptide is Putative alpha-neurotoxin RjAa9 (Rhopalurus junceus (Caribbean blue scorpion)).